The following is a 427-amino-acid chain: Histidine--tRNA ligase (427 aa).

It belongs to the class-II aminoacyl-tRNA synthetase family. As to quaternary structure, homodimer.

The protein resides in the cytoplasm. The enzyme catalyses tRNA(His) + L-histidine + ATP = L-histidyl-tRNA(His) + AMP + diphosphate + H(+). This is Histidine--tRNA ligase from Deinococcus radiodurans (strain ATCC 13939 / DSM 20539 / JCM 16871 / CCUG 27074 / LMG 4051 / NBRC 15346 / NCIMB 9279 / VKM B-1422 / R1).